The primary structure comprises 191 residues: MPKIKMIVGLGNIGKEYQDTRHNVGEWFIAKIAQDNNQSFSSNPKLNCNLAKVSIDYNNVVLVFPTTYMNNSGLAVSKVANFYKIAPAEILVVHDELDIDSGEIRLKKGGGHGGHNGLRSINQHLGTNDYLRLRIGIGHPGHKSKVANYVLSNPSIAQKKDIDSAIDNGICFLDDIINYKLEPVMQKLHTK.

Position 17 (Tyr-17) interacts with tRNA. His-22 serves as the catalytic Proton acceptor. Positions 68, 70, and 116 each coordinate tRNA.

Belongs to the PTH family. In terms of assembly, monomer.

It localises to the cytoplasm. It carries out the reaction an N-acyl-L-alpha-aminoacyl-tRNA + H2O = an N-acyl-L-amino acid + a tRNA + H(+). Its function is as follows. Hydrolyzes ribosome-free peptidyl-tRNAs (with 1 or more amino acids incorporated), which drop off the ribosome during protein synthesis, or as a result of ribosome stalling. Functionally, catalyzes the release of premature peptidyl moieties from peptidyl-tRNA molecules trapped in stalled 50S ribosomal subunits, and thus maintains levels of free tRNAs and 50S ribosomes. This chain is Peptidyl-tRNA hydrolase, found in Francisella tularensis subsp. mediasiatica (strain FSC147).